A 407-amino-acid chain; its full sequence is MKYDHLLVRYGELTLKGSNRKKFVNQLRNNVNKSLKGLDGFVVKGKRDRMYIELEDHADINEITYRLSKIFGIKSISPVLKVEKTIEAMSAAAIKFAQQFEENSTFKIDVKRADKNFPMDTYELQRELGGTVLKQIENVSVNVKRPDHEIRVEVRLDAIYMYEEVVPGSGGLPVGTGGKTLLMLSGGIDSPVAGMEVMRRGVTIEAIHFHSPPFTSDQAKEKVIELTRILAERVGPIKLHIVPFTELQKQVNKVVHPRYTMTSTRRMMMRVADKLVHQIGALAIVNGENLGQVASQTLHSMYAINNVTSTPVLRPLLTYDKEEIIIKSKEIGTFETSIQPFEDCCTIFTPKNPVTEPNFEKVVQYESVFDFEEMINRAVENIETLEITSDYKTIKEQQTNQLINDFL.

The THUMP domain occupies 61 to 165 (NEITYRLSKI…LDAIYMYEEV (105 aa)). ATP-binding positions include 183 to 184 (ML), 208 to 209 (HF), R265, G287, and Q296.

The protein belongs to the ThiI family.

It is found in the cytoplasm. It catalyses the reaction [ThiI sulfur-carrier protein]-S-sulfanyl-L-cysteine + a uridine in tRNA + 2 reduced [2Fe-2S]-[ferredoxin] + ATP + H(+) = [ThiI sulfur-carrier protein]-L-cysteine + a 4-thiouridine in tRNA + 2 oxidized [2Fe-2S]-[ferredoxin] + AMP + diphosphate. The enzyme catalyses [ThiS sulfur-carrier protein]-C-terminal Gly-Gly-AMP + S-sulfanyl-L-cysteinyl-[cysteine desulfurase] + AH2 = [ThiS sulfur-carrier protein]-C-terminal-Gly-aminoethanethioate + L-cysteinyl-[cysteine desulfurase] + A + AMP + 2 H(+). The protein operates within cofactor biosynthesis; thiamine diphosphate biosynthesis. In terms of biological role, catalyzes the ATP-dependent transfer of a sulfur to tRNA to produce 4-thiouridine in position 8 of tRNAs, which functions as a near-UV photosensor. Also catalyzes the transfer of sulfur to the sulfur carrier protein ThiS, forming ThiS-thiocarboxylate. This is a step in the synthesis of thiazole, in the thiamine biosynthesis pathway. The sulfur is donated as persulfide by IscS. In Staphylococcus aureus (strain Mu3 / ATCC 700698), this protein is Probable tRNA sulfurtransferase.